The sequence spans 254 residues: Isoprenyl transferase (254 aa).

Residue D24 is part of the active site. D24 serves as a coordination point for Mg(2+). Residues 25 to 28 (GNGR), W29, R37, H41, and 69 to 71 (SSE) each bind substrate. Catalysis depends on N72, which acts as the Proton acceptor. Substrate is bound by residues W73, R75, R192, and 198–200 (RIS). Position 211 (E211) interacts with Mg(2+).

It belongs to the UPP synthase family. Homodimer. Requires Mg(2+) as cofactor.

In terms of biological role, catalyzes the condensation of isopentenyl diphosphate (IPP) with allylic pyrophosphates generating different type of terpenoids. The polypeptide is Isoprenyl transferase (Bordetella parapertussis (strain 12822 / ATCC BAA-587 / NCTC 13253)).